The chain runs to 452 residues: FERM domain-containing protein 8 (452 aa).

The region spanning 28-374 is the FERM domain; that stretch reads MDVIIYLIND…YCIELSQSTE (347 aa). Residues 373-387 show a composition bias toward polar residues; sequence TESPASDSTPGNSQL. A disordered region spans residues 373–395; the sequence is TESPASDSTPGNSQLSEKRSKLK.

It localises to the cytoplasm. The protein localises to the cytosol. Its subcellular location is the cell membrane. In terms of biological role, promotes the cell surface stability of RHBDF1 and RHBDF2 and prevents their degradation via the endolysosomal pathway. By acting on RHBDF proteins, involved in ADAM17-mediated ligand shedding. May negatively regulate Wnt signaling. This Xenopus laevis (African clawed frog) protein is FERM domain-containing protein 8 (frmd8).